A 383-amino-acid chain; its full sequence is MLNFDLLTTDGLARRGRMTLNHGVVETPIFMPVGTYGAVKAMSPVELKDIGAQIILGNTFHLWLRPALEVIDAHKGLHGFVGWDKPMLTDSGGFQVFSLGDLRKITEEGVHFASPINGDRLFLSPEISMQIQRRLNSDIVMQFDECTPYQIDGRPATEAEAAASMRMSLRWAQRSRNEFERERNPNALFGIVQGGMFEPLRDESLAGLQAIDADAGGQGFGGYAIGGLSVGEPKEDMIRVLQHVAPRLPANKPHYLMGVGTPEDLVAGVAAGIDMFDCVMPTRNARNGWLFTRFGDIKIKNAVHRNDPRPLDETCGCYTCRNFSRAYLHHLQRVGEILGARLNTIHNLHYYLELMADMRTAIESHSFAVFRARFAADRARGAL.

The Proton acceptor role is filled by aspartate 90. Substrate-binding positions include 90–94, aspartate 144, glutamine 193, and glycine 227; that span reads DSGGF. Residues 258–264 form an RNA binding region; that stretch reads GVGTPED. Aspartate 277 functions as the Nucleophile in the catalytic mechanism. Residues 282-286 are RNA binding; important for wobble base 34 recognition; the sequence is TRNAR. Zn(2+)-binding residues include cysteine 315, cysteine 317, cysteine 320, and histidine 346.

It belongs to the queuine tRNA-ribosyltransferase family. As to quaternary structure, homodimer. Within each dimer, one monomer is responsible for RNA recognition and catalysis, while the other monomer binds to the replacement base PreQ1. It depends on Zn(2+) as a cofactor.

It carries out the reaction 7-aminomethyl-7-carbaguanine + guanosine(34) in tRNA = 7-aminomethyl-7-carbaguanosine(34) in tRNA + guanine. It functions in the pathway tRNA modification; tRNA-queuosine biosynthesis. Its function is as follows. Catalyzes the base-exchange of a guanine (G) residue with the queuine precursor 7-aminomethyl-7-deazaguanine (PreQ1) at position 34 (anticodon wobble position) in tRNAs with GU(N) anticodons (tRNA-Asp, -Asn, -His and -Tyr). Catalysis occurs through a double-displacement mechanism. The nucleophile active site attacks the C1' of nucleotide 34 to detach the guanine base from the RNA, forming a covalent enzyme-RNA intermediate. The proton acceptor active site deprotonates the incoming PreQ1, allowing a nucleophilic attack on the C1' of the ribose to form the product. After dissociation, two additional enzymatic reactions on the tRNA convert PreQ1 to queuine (Q), resulting in the hypermodified nucleoside queuosine (7-(((4,5-cis-dihydroxy-2-cyclopenten-1-yl)amino)methyl)-7-deazaguanosine). The chain is Queuine tRNA-ribosyltransferase from Ralstonia nicotianae (strain ATCC BAA-1114 / GMI1000) (Ralstonia solanacearum).